The chain runs to 481 residues: Proline--tRNA ligase (481 aa).

The protein belongs to the class-II aminoacyl-tRNA synthetase family. ProS type 3 subfamily. As to quaternary structure, homodimer.

The protein localises to the cytoplasm. It carries out the reaction tRNA(Pro) + L-proline + ATP = L-prolyl-tRNA(Pro) + AMP + diphosphate. In terms of biological role, catalyzes the attachment of proline to tRNA(Pro) in a two-step reaction: proline is first activated by ATP to form Pro-AMP and then transferred to the acceptor end of tRNA(Pro). The chain is Proline--tRNA ligase from Chloroherpeton thalassium (strain ATCC 35110 / GB-78).